A 187-amino-acid chain; its full sequence is Transmembrane protein 11-A, mitochondrial (187 aa).

2 consecutive transmembrane segments (helical) span residues 79–95 (TAVL…LALP) and 102–119 (VSLP…LYGI).

It belongs to the TMEM11 family.

It localises to the mitochondrion inner membrane. Plays a role in mitochondrial morphogenesis. This chain is Transmembrane protein 11-A, mitochondrial (tmem11-a), found in Xenopus laevis (African clawed frog).